Reading from the N-terminus, the 1558-residue chain is Calmodulin-regulated spectrin-associated protein 1-B (1558 aa).

The Calponin-homology (CH) domain maps to 231 to 346 (WYWKLVPVRY…FIAELFWWFE (116 aa)). 3 stretches are compositionally biased toward polar residues: residues 400-417 (VQNSPEVCNSNKGSSGFS), 440-450 (ACRNRSNSLTQ), and 504-516 (ASTVTPKHQSHPG). Disordered regions lie at residues 400–464 (VQNS…SDKR), 504–523 (ASTVTPKHQSHPGQGSVRRI), 551–585 (NDITLTNSEDTERQGVTPGAKSIWGRQEDASSDSR), 602–675 (AKEK…APGQ), 737–790 (TKEL…VASG), 803–850 (QRFG…QNKD), and 943–968 (DRSKEAEEPEKASCEWAGGGTVSSSP). Over residues 602–620 (AKEKSISLNKEEESGEGRQ) the composition is skewed to basic and acidic residues. Residues 643–658 (QTLNRTFTPNTSSEFE) are compositionally biased toward polar residues. Positions 737–772 (TKELHPDKKQHFEEEVESAKLREDMNVKEHEDKDGG) are enriched in basic and acidic residues. Composition is skewed to low complexity over residues 776–790 (SSPGQQSQVSSVASG) and 812–822 (RSSTSSSQRTT). A coiled-coil region spans residues 849 to 887 (KDNANMLASELVQLHMQLEEKRRAIESQKKKMEILTARQ). A compositionally biased stretch (basic and acidic residues) spans 943-955 (DRSKEAEEPEKAS). The stretch at 971-1004 (VEEEVDLNECNRSIELLNEAIGSIQQQMMQLSLQ) forms a coiled coil. Disordered regions lie at residues 1041–1131 (FVEP…TFHL), 1257–1293 (LRKQQLEAESEQKRDETRRKAEEERIRKEEEKARREL), 1305–1344 (ELCEEQEQPQPKPKTKPKKQRLKSVVKEEPSIDPLPKCPA), and 1360–1414 (LASV…ITST). Residues 1080–1090 (SSTPTPTDSPS) show a composition bias toward low complexity. The segment covering 1106–1115 (DFVQSSVRSE) has biased composition (polar residues). Positions 1243–1303 (AFLLKQQRKA…IKQEYLRKKQ (61 aa)) form a coiled coil. Residues 1317-1328 (PKTKPKKQRLKS) show a composition bias toward basic residues. A CKK domain is found at 1421–1555 (GPKLFKEPSA…QAKRPAGPKK (135 aa)).

This sequence belongs to the CAMSAP1 family.

Its subcellular location is the cytoplasm. The protein localises to the cytoskeleton. Key microtubule-organizing protein that specifically binds the minus-end of non-centrosomal microtubules and regulates their dynamics and organization. Specifically recognizes growing microtubule minus-ends and stabilizes microtubules. Acts on free microtubule minus-ends that are not capped by microtubule-nucleating proteins or other factors and protects microtubule minus-ends from depolymerization. In contrast to camsap2 and camsap3, tracks along the growing tips of minus-end microtubules without significantly affecting the polymerization rate: binds at the very tip of the microtubules minus-end and acts as a minus-end tracking protein (-TIP) that dissociates from microtubules after allowing tubulin incorporation. Through interaction with spectrin may regulate neurite outgrowth. The sequence is that of Calmodulin-regulated spectrin-associated protein 1-B (camsap1b) from Danio rerio (Zebrafish).